The following is a 1433-amino-acid chain: Probable ATP-dependent RNA helicase spindle-E (1433 aa).

Residues 126 to 294 (INAINENPVV…FANERSAPPV (169 aa)) form the Helicase ATP-binding domain. An ATP-binding site is contributed by 139–146 (GETGCGKT). The DEAH box motif lies at 240–243 (DEVH). One can recognise a Helicase C-terminal domain in the interval 355–526 (TGKSYNQSLR…NCVLKAKELK (172 aa)). A Tudor domain is found at 935–998 (AGAITKGLML…RLMSQDLLRH (64 aa)).

The protein belongs to the DEAD box helicase family. DEAH subfamily.

Its subcellular location is the cytoplasm. It carries out the reaction ATP + H2O = ADP + phosphate + H(+). In terms of biological role, probable ATP-binding RNA helicase which plays a central role during spermatogenesis and oogenesis by repressing transposable elements and preventing their mobilization, which is essential for the germline integrity. Acts via the piRNA metabolic process, which mediates the repression of transposable elements during meiosis by forming complexes composed of piRNAs and Piwi and govern the methylation and subsequent repression of transposons. Involved in the repression of LTR retrotransposon copia. Also involved in telomere regulation by repressing specialized telomeric retroelements HeT-A, TAHRE, and TART; Drosophila telomeres being maintained by transposition of specialized telomeric retroelements. Involved in telomeric trans-silencing, a repression mechanism by which a transposon or a transgene inserted in subtelomeric heterochromatin has the capacity to repress in trans in the female germline, a homologous transposon, or transgene located in euchromatin. Involved in the repression of testis-expressed Stellate genes by the homologous Su(Ste) repeats. Required for anteroposterior and dorsoventral axis formation during oogenesis. This is Probable ATP-dependent RNA helicase spindle-E (spn-E) from Drosophila pseudoobscura pseudoobscura (Fruit fly).